A 260-amino-acid chain; its full sequence is Ubiquinone/menaquinone biosynthesis C-methyltransferase UbiE (260 aa).

Residues Thr-83, Asp-104, and 132 to 133 contribute to the S-adenosyl-L-methionine site; that span reads NA.

This sequence belongs to the class I-like SAM-binding methyltransferase superfamily. MenG/UbiE family.

It carries out the reaction a 2-demethylmenaquinol + S-adenosyl-L-methionine = a menaquinol + S-adenosyl-L-homocysteine + H(+). It catalyses the reaction a 2-methoxy-6-(all-trans-polyprenyl)benzene-1,4-diol + S-adenosyl-L-methionine = a 5-methoxy-2-methyl-3-(all-trans-polyprenyl)benzene-1,4-diol + S-adenosyl-L-homocysteine + H(+). It participates in quinol/quinone metabolism; menaquinone biosynthesis; menaquinol from 1,4-dihydroxy-2-naphthoate: step 2/2. The protein operates within cofactor biosynthesis; ubiquinone biosynthesis. In terms of biological role, methyltransferase required for the conversion of demethylmenaquinol (DMKH2) to menaquinol (MKH2) and the conversion of 2-polyprenyl-6-methoxy-1,4-benzoquinol (DDMQH2) to 2-polyprenyl-3-methyl-6-methoxy-1,4-benzoquinol (DMQH2). The sequence is that of Ubiquinone/menaquinone biosynthesis C-methyltransferase UbiE from Bartonella tribocorum (strain CIP 105476 / IBS 506).